Reading from the N-terminus, the 156-residue chain is Ribosomal RNA large subunit methyltransferase H (156 aa).

Residues Leu-72, Gly-104, and 123-128 (LSKMTL) contribute to the S-adenosyl-L-methionine site.

It belongs to the RNA methyltransferase RlmH family. As to quaternary structure, homodimer.

The protein localises to the cytoplasm. The catalysed reaction is pseudouridine(1915) in 23S rRNA + S-adenosyl-L-methionine = N(3)-methylpseudouridine(1915) in 23S rRNA + S-adenosyl-L-homocysteine + H(+). Its function is as follows. Specifically methylates the pseudouridine at position 1915 (m3Psi1915) in 23S rRNA. This is Ribosomal RNA large subunit methyltransferase H from Maridesulfovibrio salexigens (strain ATCC 14822 / DSM 2638 / NCIMB 8403 / VKM B-1763) (Desulfovibrio salexigens).